Here is a 432-residue protein sequence, read N- to C-terminus: 3-phosphoshikimate 1-carboxyvinyltransferase (432 aa).

3-phosphoshikimate is bound by residues Lys23, Ser24, and Arg28. Lys23 serves as a coordination point for phosphoenolpyruvate. Positions 95 and 123 each coordinate phosphoenolpyruvate. Positions 167, 169, 317, and 344 each coordinate 3-phosphoshikimate. Residue Gln169 participates in phosphoenolpyruvate binding. Residue Asp317 is the Proton acceptor of the active site. 2 residues coordinate phosphoenolpyruvate: Arg348 and Arg390.

Belongs to the EPSP synthase family. As to quaternary structure, monomer.

It is found in the cytoplasm. The catalysed reaction is 3-phosphoshikimate + phosphoenolpyruvate = 5-O-(1-carboxyvinyl)-3-phosphoshikimate + phosphate. The protein operates within metabolic intermediate biosynthesis; chorismate biosynthesis; chorismate from D-erythrose 4-phosphate and phosphoenolpyruvate: step 6/7. In terms of biological role, catalyzes the transfer of the enolpyruvyl moiety of phosphoenolpyruvate (PEP) to the 5-hydroxyl of shikimate-3-phosphate (S3P) to produce enolpyruvyl shikimate-3-phosphate and inorganic phosphate. The chain is 3-phosphoshikimate 1-carboxyvinyltransferase from Staphylococcus aureus (strain Newman).